Here is a 395-residue protein sequence, read N- to C-terminus: Serine-type anaerobic sulfatase-maturating enzyme (395 aa).

Residues 18–249 enclose the Radical SAM core domain; sequence PRSPVPFHIL…QWRKRCDRGR (232 aa). [4Fe-4S] cluster contacts are provided by Cys35 and Cys39. Tyr41 is an S-adenosyl-L-methionine binding site. Residue Cys42 coordinates [4Fe-4S] cluster. Positions 84 and 152 each coordinate S-adenosyl-L-methionine. [4Fe-4S] cluster contacts are provided by Cys270, Cys276, and Cys291. The active-site Proton acceptor is Asp292. Positions 331, 334, 340, 344, and 357 each coordinate [4Fe-4S] cluster.

Belongs to the radical SAM superfamily. Anaerobic sulfatase-maturating enzyme family. In terms of assembly, monomer. Interacts with AtsA prior to its export to the periplasm. This interaction depends on the presence of AtsA 'Ser-72'. Binding of SAM to AtsB promotes the formation of a ternary AtsA-AtsB-SAM complex. [4Fe-4S] cluster serves as cofactor.

Its subcellular location is the cytoplasm. The catalysed reaction is L-seryl-[sulfatase] + S-adenosyl-L-methionine = 3-oxo-L-alanyl-[sulfatase] + 5'-deoxyadenosine + L-methionine + H(+). The protein operates within protein modification; sulfatase oxidation. With respect to regulation, activity is inhibited by iron chelators. In terms of biological role, involved in 'Ser-type' sulfatase maturation under anaerobic conditions. Catalyzes the post-translational modification of serine ('Ser-72' in the arylsulfatase AtsA) into 3-oxoalanine (also known as C(alpha)-formylglycine (FGly)), by a free radical chemical mechanism initiated via the reductive cleavage of S-adenosyl-L-methionine (SAM). Is capable of catalyzing multiple turnovers. In vitro, use of a peptide substrate in which the target serine is changed to cysteine also gives rise to turnover, supporting approximately 4-fold the activity of that observed with the natural substrate. The sequence is that of Serine-type anaerobic sulfatase-maturating enzyme from Klebsiella pneumoniae.